We begin with the raw amino-acid sequence, 395 residues long: D-alanine--D-alanine ligase (395 aa).

In terms of domain architecture, ATP-grasp spans 172–391 (KVVLDAAGIP…YTELITRLIE (220 aa)). 204–266 (DAGLTYPLFV…EQGIDGREIE (63 aa)) contacts ATP. Residues Asp345, Glu358, and Asn360 each coordinate Mg(2+).

The protein belongs to the D-alanine--D-alanine ligase family. The cofactor is Mg(2+). Mn(2+) is required as a cofactor.

Its subcellular location is the cytoplasm. It carries out the reaction 2 D-alanine + ATP = D-alanyl-D-alanine + ADP + phosphate + H(+). Its pathway is cell wall biogenesis; peptidoglycan biosynthesis. In terms of biological role, cell wall formation. This Bifidobacterium longum (strain DJO10A) protein is D-alanine--D-alanine ligase.